Here is a 200-residue protein sequence, read N- to C-terminus: UPF0637 protein LCABL_14170 (200 aa).

Belongs to the UPF0637 family.

This Lacticaseibacillus casei (strain BL23) (Lactobacillus casei) protein is UPF0637 protein LCABL_14170.